The sequence spans 312 residues: Ribosomal RNA small subunit methyltransferase H (312 aa).

Residues 34–36, Asp-54, Phe-78, Asp-100, and Gln-107 contribute to the S-adenosyl-L-methionine site; that span reads GGH.

This sequence belongs to the methyltransferase superfamily. RsmH family.

Its subcellular location is the cytoplasm. The enzyme catalyses cytidine(1402) in 16S rRNA + S-adenosyl-L-methionine = N(4)-methylcytidine(1402) in 16S rRNA + S-adenosyl-L-homocysteine + H(+). Functionally, specifically methylates the N4 position of cytidine in position 1402 (C1402) of 16S rRNA. The chain is Ribosomal RNA small subunit methyltransferase H from Salmonella choleraesuis (strain SC-B67).